The chain runs to 295 residues: Dual specificity protein phosphatase 15 (295 aa).

In terms of domain architecture, Tyrosine-protein phosphatase spans 1-141 (MTEGVLPGLY…LEEFGWASSQ (141 aa)). The N-myristoyl glycine moiety is linked to residue T2. C85 serves as the catalytic Phosphocysteine intermediate. The span at 251–270 (SSSCTLSASTERPDGSSTPG) shows a compositional bias: polar residues. Positions 251–272 (SSSCTLSASTERPDGSSTPGNP) are disordered.

Belongs to the protein-tyrosine phosphatase family. Non-receptor class dual specificity subfamily. In terms of tissue distribution, highly expressed in testis. Expressed in brain; up-regulated in patients with multiple sclerosis gray matter lesions.

The protein localises to the cytoplasm. The protein resides in the cell membrane. The enzyme catalyses O-phospho-L-tyrosyl-[protein] + H2O = L-tyrosyl-[protein] + phosphate. The catalysed reaction is O-phospho-L-seryl-[protein] + H2O = L-seryl-[protein] + phosphate. It carries out the reaction O-phospho-L-threonyl-[protein] + H2O = L-threonyl-[protein] + phosphate. May dephosphorylate MAPK13, ATF2, ERBB3, PDGFRB and SNX6. In terms of biological role, may play a role in the regulation of oligodendrocyte differentiation. May play a role in the regulation of myelin formation. Involved in the regulation of Erk1/2 phosphorylation in Schwann cells; the signaling may be linked to the regulation of myelination. This is Dual specificity protein phosphatase 15 from Homo sapiens (Human).